The chain runs to 174 residues: Large ribosomal subunit protein uL10 (174 aa).

It belongs to the universal ribosomal protein uL10 family. Part of the ribosomal stalk of the 50S ribosomal subunit. The N-terminus interacts with L11 and the large rRNA to form the base of the stalk. The C-terminus forms an elongated spine to which L12 dimers bind in a sequential fashion forming a multimeric L10(L12)X complex.

Its function is as follows. Forms part of the ribosomal stalk, playing a central role in the interaction of the ribosome with GTP-bound translation factors. This Nitrosospira multiformis (strain ATCC 25196 / NCIMB 11849 / C 71) protein is Large ribosomal subunit protein uL10.